The chain runs to 417 residues: Nuclear envelope integral membrane protein 2 (417 aa).

The signal sequence occupies residues 1–24; sequence MGPRQGRWWLLLWLPPLATLPVRG. 5 helical membrane passes run 148–168, 177–197, 207–227, 239–259, and 280–300; these read NIMD…FFYA, FYYS…VLLL, TFWA…CQLM, IYVL…CYKH, and LVLV…IILL.

This sequence belongs to the NEMP family.

The protein resides in the nucleus inner membrane. This Homo sapiens (Human) protein is Nuclear envelope integral membrane protein 2 (NEMP2).